A 1104-amino-acid polypeptide reads, in one-letter code: Lon protease homolog, mitochondrial (1104 aa).

The transit peptide at 1-54 (MLRGQTLRWRAALQTPRSLILRPLFAPGGYNVGPRSVLETSRRFRSLPPSLRTF) directs the protein to the mitochondrion. 2 disordered regions span residues 41-192 (SRRF…KPSV) and 296-317 (SLIP…TEKR). 2 stretches are compositionally biased toward basic and acidic residues: residues 64–104 (KPPP…DSSG) and 125–144 (KAAD…EAEA). Low complexity predominate over residues 158–169 (SDSSSESKPSGS). 2 stretches are compositionally biased toward basic and acidic residues: residues 172-187 (GGDD…DKAL) and 308-317 (NSEDKTTEKR). The Lon N-terminal domain occupies 199–451 (VMAIPIAKRP…KGLVVLKKEL (253 aa)). Position 604 to 611 (604 to 611 (GPPGVGKT)) interacts with ATP. Over residues 825 to 839 (AEGKAAQEESEKETG) the composition is skewed to basic and acidic residues. Residues 825-857 (AEGKAAQEESEKETGPIESTSEQEKATTENPRV) form a disordered region. Residues 891–1077 (TFPPGVTMGL…SEVFDILFAD (187 aa)) form the Lon proteolytic domain. Catalysis depends on residues Ser983 and Lys1026.

This sequence belongs to the peptidase S16 family. In terms of assembly, homohexamer or homoheptamer. Organized in a ring with a central cavity.

It localises to the mitochondrion matrix. The enzyme catalyses Hydrolysis of proteins in presence of ATP.. In terms of biological role, ATP-dependent serine protease that mediates the selective degradation of misfolded, unassembled or oxidatively damaged polypeptides as well as certain short-lived regulatory proteins in the mitochondrial matrix. May also have a chaperone function in the assembly of inner membrane protein complexes. Participates in the regulation of mitochondrial gene expression and in the maintenance of the integrity of the mitochondrial genome. Binds to mitochondrial DNA in a site-specific manner. The sequence is that of Lon protease homolog, mitochondrial (pim1) from Emericella nidulans (strain FGSC A4 / ATCC 38163 / CBS 112.46 / NRRL 194 / M139) (Aspergillus nidulans).